A 123-amino-acid chain; its full sequence is Preprofallaxidin-3 (123 aa).

Positions 1 to 22 (MASLKKSLFLVLFLGLVSLSIC) are cleaved as a signal peptide. A propeptide spanning residues 23–46 (EEKKRENEDDAEDENHEEESEEKR) is cleaved from the precursor. The interval 26-46 (KRENEDDAEDENHEEESEEKR) is disordered. Positions 30-42 (EDDAEDENHEEES) are enriched in acidic residues. Leucine amide is present on L62. The propeptide occupies 66–70 (SEEKR). F74 carries the phenylalanine amide modification. Residues 78–82 (SEEKR) constitute a propeptide that is removed on maturation. F88 bears the Phenylalanine amide mark. The propeptide occupies 92–96 (SEEKR). An Isoleucine amide modification is found at I102. A propeptide spanning residues 106–110 (SEEKR) is cleaved from the precursor. Isoleucine amide is present on I116. Positions 120–123 (KKKK) are excised as a propeptide.

The protein belongs to the frog skin active peptide (FSAP) family. Brevinin subfamily. Expressed by the skin glands.

It is found in the secreted. In terms of biological role, fallaxidin-1.1 shows no antibacterial activity against Gram-positive or Gram-negative bacteria. Does not inhibit the formation of NO by neuronal nitric oxide synthase. Has no effect on splenocyte proliferation or smooth muscle contraction. Fallaxidin-1.2 shows no antibacterial activity against Gram-positive or Gram-negative bacteria. Does not inhibit the formation of NO by neuronal nitric oxide synthase. Has no effect on splenocyte proliferation or smooth muscle contraction. Its function is as follows. Fallaxidin-1.3 shows no antibacterial activity against Gram-positive or Gram-negative bacteria. Does not inhibit the formation of NO by neuronal nitric oxide synthase. Has no effect on splenocyte proliferation or smooth muscle contraction. Functionally, fallaxidin-3.2 shows antibacterial activity against the Gram-positive bacteria E.faecalis (MIC=100 uM) and L.lactis (MIC=500 uM). No antibacterial activity against the Gram-positive bacteria B.cereus, L.innocua, M.luteus, S.epidermidis, S.uberis and S.aureus, or the Gram-negative bacteria E.cloacae and E.coli. The polypeptide is Preprofallaxidin-3 (Litoria fallax (Eastern dwarf tree frog)).